A 222-amino-acid chain; its full sequence is UPF0758 protein CT0611 (222 aa).

The region spanning 100-222 is the MPN domain; sequence KVKGARDVFE…WFSFRDHALL (123 aa). The Zn(2+) site is built by His171, His173, and Asp184. Residues 171-184 carry the JAMM motif motif; sequence HNHPSGDVQPSNAD.

Belongs to the UPF0758 family.

This is UPF0758 protein CT0611 from Chlorobaculum tepidum (strain ATCC 49652 / DSM 12025 / NBRC 103806 / TLS) (Chlorobium tepidum).